The chain runs to 612 residues: Proton pump-interactor 1 (612 aa).

The tract at residues 1-58 (MGVEVVNSGGFEVAPAPFEGKPEKNGKLDQGKGDDAPINFGSVGELPKNAEENNNKVV) is disordered. Over residues 20–35 (GKPEKNGKLDQGKGDD) the composition is skewed to basic and acidic residues. Coiled coils occupy residues 90-113 (PKIK…RTGV) and 251-314 (LDGV…NSEY). Basic and acidic residues-rich tracts occupy residues 374 to 387 (LSRD…DEKP), 434 to 446 (EKAK…KNVA), 459 to 498 (PQKE…EKAA), and 505 to 519 (AQKE…EQEK). Residues 374–572 (LSRDGRMRNP…PIRNRTRGRG (199 aa)) form a disordered region. A coiled-coil region spans residues 466-526 (VDAATAKEMR…QEKKAKKKTG (61 aa)). Residues 531–545 (TETEEVPEASEEEIE) show a composition bias toward acidic residues. A Phosphoserine modification is found at serine 540. Positions 549-564 (QEEKPQKEKVFKEKPI) are enriched in basic and acidic residues. The chain crosses the membrane as a helical span at residues 591 to 611 (VYAAPAALVVLLLLVLGYYYV).

This sequence belongs to the plant Proton pump-interactor protein family. In terms of assembly, interacts with AHA1 via N-terminal region. As to expression, strongly expressed in root and shoot vascular systems, particularly in meristematic and sink tissues. Also present in pollen, stigmas and siliques, but not in developing embryos.

Its subcellular location is the cell membrane. It localises to the endoplasmic reticulum membrane. Promotes AHA1 plasma membrane ATPase activity by binding to a site different from the 14-3-3 binding site. The polypeptide is Proton pump-interactor 1 (PPI1) (Arabidopsis thaliana (Mouse-ear cress)).